The sequence spans 958 residues: Protein translocase subunit SecA (958 aa).

Residues Gln-86, 104–108 (GEGKT), and Asp-494 contribute to the ATP site. Disordered regions lie at residues 863–883 (AAATGESAPAEPETDDEAEKT) and 902–937 (QPISHAEGKVPANKRPKSEELHSPWADGRTFPGTGK). Positions 941, 943, 952, and 953 each coordinate Zn(2+).

The protein belongs to the SecA family. Monomer and homodimer. Part of the essential Sec protein translocation apparatus which comprises SecA, SecYEG and auxiliary proteins SecDF. Other proteins may also be involved. The cofactor is Zn(2+).

Its subcellular location is the cell membrane. The protein resides in the cytoplasm. It catalyses the reaction ATP + H2O + cellular proteinSide 1 = ADP + phosphate + cellular proteinSide 2.. Part of the Sec protein translocase complex. Interacts with the SecYEG preprotein conducting channel. Has a central role in coupling the hydrolysis of ATP to the transfer of proteins into and across the cell membrane, serving as an ATP-driven molecular motor driving the stepwise translocation of polypeptide chains across the membrane. The protein is Protein translocase subunit SecA of Bifidobacterium adolescentis (strain ATCC 15703 / DSM 20083 / NCTC 11814 / E194a).